Reading from the N-terminus, the 88-residue chain is Cell division topological specificity factor (88 aa).

Belongs to the MinE family.

In terms of biological role, prevents the cell division inhibition by proteins MinC and MinD at internal division sites while permitting inhibition at polar sites. This ensures cell division at the proper site by restricting the formation of a division septum at the midpoint of the long axis of the cell. The sequence is that of Cell division topological specificity factor from Aeromonas salmonicida (strain A449).